We begin with the raw amino-acid sequence, 466 residues long: Asparagine--tRNA ligase (466 aa).

Belongs to the class-II aminoacyl-tRNA synthetase family. As to quaternary structure, homodimer.

The protein localises to the cytoplasm. It catalyses the reaction tRNA(Asn) + L-asparagine + ATP = L-asparaginyl-tRNA(Asn) + AMP + diphosphate + H(+). This Photobacterium profundum (strain SS9) protein is Asparagine--tRNA ligase.